The following is a 145-amino-acid chain: Transcription antitermination protein NusB (145 aa).

Belongs to the NusB family.

In terms of biological role, involved in transcription antitermination. Required for transcription of ribosomal RNA (rRNA) genes. Binds specifically to the boxA antiterminator sequence of the ribosomal RNA (rrn) operons. This chain is Transcription antitermination protein NusB, found in Geotalea uraniireducens (strain Rf4) (Geobacter uraniireducens).